A 452-amino-acid polypeptide reads, in one-letter code: FAD transporter (452 aa).

A run of 12 helical transmembrane segments spans residues 21 to 41 (LPNL…TFFI), 49 to 69 (LAAI…AIGV), 96 to 116 (ALLL…IFIE), 131 to 151 (LIHD…LLMV), 167 to 187 (MIMT…IFGI), 199 to 219 (AIAT…LLII), 248 to 270 (AALM…AHID), 283 to 303 (LESV…PFIA), 324 to 344 (FILV…QPLA), 357 to 377 (LSFY…VIIF), 392 to 412 (VINL…GSYI), and 417 to 437 (GLLL…YYLA).

It belongs to the multi antimicrobial extrusion (MATE) (TC 2.A.66.1) family.

The protein localises to the cell inner membrane. Its function is as follows. Flavin adenine dinucleotide (FAD) transporter that facilitates export of flavin electron shuttles. This chain is FAD transporter, found in Shewanella oneidensis (strain ATCC 700550 / JCM 31522 / CIP 106686 / LMG 19005 / NCIMB 14063 / MR-1).